We begin with the raw amino-acid sequence, 354 residues long: uncharacterized protein (354 aa).

The protein to yeast YHR056c.

This is an uncharacterized protein from Saccharomyces cerevisiae (strain ATCC 204508 / S288c) (Baker's yeast).